Reading from the N-terminus, the 408-residue chain is Multidrug resistance protein MdtG (408 aa).

11 helical membrane-spanning segments follow: residues 16–36 (LIVAWLGCFLTGAAFSLVMPF), 58–78 (IVFSITFLFSAIASPFWGGLA), 92–112 (LGMGIVMVLMGLAQNIWQFLI), 115–135 (ALLGLLGGFVPNANALIATQV), 146–166 (TLSTGGVSGALLGPMAGGLLA), 173–193 (PVFFITASVLILCFFVTLFCI), 224–244 (LFVTTLIIQVATGSIAPILTL), 256–276 (VAFISGMIASVPGVAALLSAP), 290–310 (ILITALIFSVLLLIPMSYVQT), 319–339 (FLLGAADGALLPAVQTLLVYN), and 378–398 (AVFLVTAGVVLFNAVYSWNSL).

This sequence belongs to the major facilitator superfamily. DHA1 family. MdtG (TC 2.A.1.2.20) subfamily.

It localises to the cell inner membrane. Its function is as follows. Confers resistance to fosfomycin and deoxycholate. The polypeptide is Multidrug resistance protein MdtG (Escherichia coli O139:H28 (strain E24377A / ETEC)).